The sequence spans 302 residues: Succinate--CoA ligase [ADP-forming] subunit alpha (302 aa).

CoA contacts are provided by residues 17–20 (TGST), lysine 43, and 96–98 (ITE). Tyrosine 159 serves as a coordination point for substrate. Histidine 247 (tele-phosphohistidine intermediate) is an active-site residue.

Belongs to the succinate/malate CoA ligase alpha subunit family. Heterotetramer of two alpha and two beta subunits.

It catalyses the reaction succinate + ATP + CoA = succinyl-CoA + ADP + phosphate. It carries out the reaction GTP + succinate + CoA = succinyl-CoA + GDP + phosphate. Its pathway is carbohydrate metabolism; tricarboxylic acid cycle; succinate from succinyl-CoA (ligase route): step 1/1. In terms of biological role, succinyl-CoA synthetase functions in the citric acid cycle (TCA), coupling the hydrolysis of succinyl-CoA to the synthesis of either ATP or GTP and thus represents the only step of substrate-level phosphorylation in the TCA. The alpha subunit of the enzyme binds the substrates coenzyme A and phosphate, while succinate binding and nucleotide specificity is provided by the beta subunit. The protein is Succinate--CoA ligase [ADP-forming] subunit alpha of Staphylococcus aureus (strain MSSA476).